A 513-amino-acid polypeptide reads, in one-letter code: QWRF motif-containing protein 9 (513 aa).

Polar residues-rich tracts occupy residues 1–26 (MTAA…PSES), 43–55 (GTSS…SPKR), and 65–78 (VTPS…PQST). Disordered regions lie at residues 1–89 (MTAA…RREV), 115–144 (GTLE…LSDQ), and 184–293 (VSNR…LRVR). The segment covering 79-89 (PRRESLDRREV) has biased composition (basic and acidic residues). Composition is skewed to polar residues over residues 202–211 (ESVSSGSSNG) and 244–262 (VDSS…SPRG). The QWRF motif motif lies at 334–337 (QWQF).

It belongs to the QWRF family.

The polypeptide is QWRF motif-containing protein 9 (QWRF9) (Arabidopsis thaliana (Mouse-ear cress)).